Consider the following 1401-residue polypeptide: Kinesin-like protein KIF27 (1401 aa).

Positions 5–341 (PVKVAVRIRP…LKYANRARNI (337 aa)) constitute a Kinesin motor domain. 84-91 (GQTGSGKT) lines the ATP pocket. Coiled coils occupy residues 352–413 (ESDR…GYQC) and 489–557 (LAAD…KLNL). A phosphoserine mark is found at serine 643, serine 646, serine 672, serine 675, and serine 704. Residues 643–662 (SDNSDDEESEGQEKSGTRCR) are disordered. 4 coiled-coil regions span residues 705–886 (QELN…IQLK), 916–1070 (DHLQ…AAIE), 1118–1154 (NKVV…LESA), and 1190–1219 (EGIM…TSRD). Serine 999 is modified (phosphoserine). A compositionally biased stretch (basic and acidic residues) spans 1259 to 1280 (EELKWASRPESMKLSGREREMD). Residues 1259–1332 (EELKWASRPE…TETDDNQFTK (74 aa)) are disordered. Over residues 1281 to 1292 (SSASSLRTQPNP) the composition is skewed to polar residues. Residues serine 1367 and serine 1389 each carry the phosphoserine modification.

The protein belongs to the TRAFAC class myosin-kinesin ATPase superfamily. Kinesin family. KIF27 subfamily. As to quaternary structure, interacts with STK36. Testis, pancreatic islet, germ cell tumors and Jurkat T-cells.

It is found in the cytoplasm. The protein resides in the cytoskeleton. It localises to the cell projection. Its subcellular location is the cilium. Its function is as follows. Plays an essential role in motile ciliogenesis. In Homo sapiens (Human), this protein is Kinesin-like protein KIF27 (KIF27).